The chain runs to 252 residues: Transmembrane ascorbate-dependent reductase CYB561 (252 aa).

N-acetylmethionine is present on Met1. Residues 1-17 (MEGPASPAPAPGALPYY) are Cytoplasmic-facing. A helical membrane pass occupies residues 18-38 (VAFSQLLGLTVVAMTGAWLGM). The region spanning 20-221 (FSQLLGLTVV…FATVVLYILT (202 aa)) is the Cytochrome b561 domain. Residues 39 to 52 (YRGGIAWESALQFN) are Vesicular-facing. Residues 53–73 (VHPLCMVIGLVFLQGDALLVY) traverse the membrane as a helical segment. The heme b site is built by His54, Arg74, and Lys81. The Cytoplasmic segment spans residues 74 to 86 (RVFRNEAKRTTKV). L-ascorbate is bound by residues Lys81 and Lys85. The helical transmembrane segment at 87–107 (LHGLLHVFAFVIALVGLVAVF) threads the bilayer. Residues His88, 117–120 (DLYS), and His122 each bind heme b. The Vesicular portion of the chain corresponds to 108 to 125 (EHHRKKGYADLYSLHSWC). Residues 126–146 (GILVFALFFAQWLVGFSFFLF) traverse the membrane as a helical segment. Over 147-159 (PGASFSLRSRYRP) the chain is Cytoplasmic. Arg154 is an L-ascorbate binding site. A helical membrane pass occupies residues 160-180 (QHVFFGAAIFLLSVATALLGL). His161 and Glu182 together coordinate heme b. The Vesicular segment spans residues 181–199 (KEALLFELGTKYSTFEPEG). The helical transmembrane segment at 200–220 (VLANVLGLLLAAFATVVLYIL) threads the bilayer. Topologically, residues 221 to 252 (TRADWKRPLQAEEQALSMDFKTLTEGDSPSSQ) are cytoplasmic. A heme b-binding site is contributed by Lys226. A phosphoserine mark is found at Ser248 and Ser250.

Heme b serves as cofactor.

The protein localises to the cytoplasmic vesicle. Its subcellular location is the secretory vesicle. The protein resides in the chromaffin granule membrane. It catalyses the reaction monodehydro-L-ascorbate radical(out) + L-ascorbate(in) = monodehydro-L-ascorbate radical(in) + L-ascorbate(out). Functionally, transmembrane reductase that uses ascorbate as an electron donor in the cytoplasm and transfers electrons across membranes to reduce monodehydro-L-ascorbate radical in the lumen of secretory vesicles. It is therefore involved the regeneration and homeostasis within secretory vesicles of ascorbate which in turn provides reducing equivalents needed to support the activity of intravesicular enzymes. This is Transmembrane ascorbate-dependent reductase CYB561 (CYB561) from Ovis aries (Sheep).